We begin with the raw amino-acid sequence, 220 residues long: Charged multivesicular body protein 2a (220 aa).

2 coiled-coil regions span residues 12 to 53 (EEML…MAKQ) and 199 to 220 (PSAA…LRRD). Residues 179–208 (LSNLPSTGGSLSVAGAKKGEPSAALADADA) are disordered. The MIT-interacting motif signature appears at 208–218 (ADLEERLNNLR).

It belongs to the SNF7 family. As to quaternary structure, probable core component of the endosomal sorting required for transport complex III (ESCRT-III). ESCRT-III components are thought to multimerize to form a flat lattice on the perimeter membrane of the endosome.

The protein resides in the late endosome membrane. It localises to the cytoplasm. Probable core component of the endosomal sorting required for transport complex III (ESCRT-III) which is involved in multivesicular bodies (MVBs) formation and sorting of endosomal cargo proteins into MVBs. MVBs contain intraluminal vesicles (ILVs) that are generated by invagination and scission from the limiting membrane of the endosome and mostly are delivered to lysosomes enabling degradation of membrane proteins, such as stimulated growth factor receptors, lysosomal enzymes and lipids. The polypeptide is Charged multivesicular body protein 2a (chmp2a) (Xenopus tropicalis (Western clawed frog)).